The chain runs to 536 residues: Hydroxylamine oxidoreductase (536 aa).

The signal sequence occupies residues 1–26 (MFEIFKKPLSRIVGATFAFAGVTLLA). Heme c is bound by residues Cys-116, Cys-119, His-120, His-136, Cys-160, Cys-163, His-164, His-168, Cys-179, Cys-182, His-183, His-198, Cys-223, Cys-226, His-227, Cys-234, Cys-237, His-238, His-241, Cys-254, Cys-257, and His-258. His-263 is a binding site for hydroxylamine. 10 residues coordinate heme c: His-274, Cys-301, Cys-304, His-305, His-311, Cys-346, Cys-349, His-350, His-443, and Tyr-451.

In terms of assembly, homotrimer; subunits are linked by two covalent bonds between Tyr-451 of one subunit and heme P460 of an adjacent subunit. Heme c is required as a cofactor.

The protein localises to the anammoxosome. It carries out the reaction hydroxylamine + 3 Fe(III)-[cytochrome c] = nitric oxide + 3 Fe(II)-[cytochrome c] + 3 H(+). Its function is as follows. Catalyzes the oxidation of hydroxylamine to nitric oxide with cytochrome c acting as an electron acceptor. Does not oxidize hydroxylamine to nitrite. Also able to catalyze the four-electron oxidation of hydrazine to N(2) in vitro with reduced efficiency; however, this reaction is probably not physiological. This chain is Hydroxylamine oxidoreductase, found in Kuenenia stuttgartiensis.